We begin with the raw amino-acid sequence, 402 residues long: tRNA(Met) cytidine acetate ligase (402 aa).

Residues 7–20 (IAEY…HIHH), glycine 102, asparagine 171, and arginine 196 each bind ATP.

The protein belongs to the TmcAL family.

It is found in the cytoplasm. It carries out the reaction cytidine(34) in elongator tRNA(Met) + acetate + ATP = N(4)-acetylcytidine(34) in elongator tRNA(Met) + AMP + diphosphate. In terms of biological role, catalyzes the formation of N(4)-acetylcytidine (ac(4)C) at the wobble position of elongator tRNA(Met), using acetate and ATP as substrates. First activates an acetate ion to form acetyladenylate (Ac-AMP) and then transfers the acetyl group to tRNA to form ac(4)C34. This chain is tRNA(Met) cytidine acetate ligase, found in Clostridium acetobutylicum (strain ATCC 824 / DSM 792 / JCM 1419 / IAM 19013 / LMG 5710 / NBRC 13948 / NRRL B-527 / VKM B-1787 / 2291 / W).